The sequence spans 161 residues: DNA-binding protein inhibitor ID-4 (161 aa).

The 53-residue stretch at Ala-52–Leu-104 folds into the bHLH domain. The segment at Arg-116–Arg-161 is disordered. The segment covering Gln-117–His-126 has biased composition (pro residues).

Heterodimer with other HLH proteins.

Its subcellular location is the nucleus. Transcriptional regulator (lacking a basic DNA binding domain) which negatively regulates the basic helix-loop-helix (bHLH) transcription factors by forming heterodimers and inhibiting their DNA binding and transcriptional activity. Implicated in regulating a variety of cellular processes, including cellular growth, senescence, differentiation, apoptosis, angiogenesis, and neoplastic transformation. The protein is DNA-binding protein inhibitor ID-4 (ID4) of Sus scrofa (Pig).